The following is a 717-amino-acid chain: Choline transporter-like protein 5 (717 aa).

Residues 1–24 (MNDTEKPADTASEEEDFGDPRTYD) form a disordered region. Over 1–38 (MNDTEKPADTASEEEDFGDPRTYDPDFKGPVSNRSCTD) the chain is Cytoplasmic. The helical transmembrane segment at 39–59 (VLCCMIFLLCIVGYIVLGLVA) threads the bilayer. Topologically, residues 60 to 242 (WVHGDPRRAA…KVFEDYATTW (183 aa)) are extracellular. Residues asparagine 88 and asparagine 190 are each glycosylated (N-linked (GlcNAc...) asparagine). Residues 243 to 263 (YWILIGLMIAMVLSWIFLILL) form a helical membrane-spanning segment. Topologically, residues 264 to 265 (RF) are cytoplasmic. A helical transmembrane segment spans residues 266–286 (IAGCLFWVFMIGVIGIIGYGI). The Extracellular segment spans residues 287 to 325 (WHCYQQYTNLQEHPRSVLTVYDIGIQTNISMYFELQQTW). An N-linked (GlcNAc...) asparagine glycan is attached at asparagine 314. Residues 326 to 346 (FTLMIILCIIEVIVILMLIFL) form a helical membrane-spanning segment. Over 347-351 (RNRIR) the chain is Cytoplasmic. The helical transmembrane segment at 352–372 (VAIILLKEGSKAIGYVPSTLV) threads the bilayer. The Extracellular segment spans residues 373–374 (YP). The chain crosses the membrane as a helical span at residues 375 to 395 (ALTFILLSICICYWVVTAVFL). The Cytoplasmic portion of the chain corresponds to 396 to 460 (ATSGVPVYKV…QYIPTFHVYN (65 aa)). A helical membrane pass occupies residues 461-481 (LFVFLWLINFVIALGQCALAG). At 482-515 (AFATYYWAMKKPDDIPRYPLFTAFGRAIRYHTGS) the chain is on the extracellular side. The helical transmembrane segment at 516-536 (LAFGSLIIALIQMFKIVLEYL) threads the bilayer. Topologically, residues 537 to 610 (NHRLKRTENT…KVAVTDEVTY (74 aa)) are cytoplasmic. Residues 611-631 (FVLFLGKILVAGSIGVLAFLF) traverse the membrane as a helical segment. The Extracellular segment spans residues 632–649 (FTQRLPVIAQGPASLNYY). The helical transmembrane segment at 650 to 670 (WVPLLTVILGSYLIAHGFFSV) threads the bilayer. Residues 671–717 (YAMCVETIFICFLEDLERNDGSTARPYYVSQPLLKIFQEENLQTKQQ) are Cytoplasmic-facing.

Belongs to the CTL (choline transporter-like) family.

The protein resides in the cell membrane. The enzyme catalyses choline(out) + n H(+)(in) = choline(in) + n H(+)(out). In terms of biological role, choline/H+ antiporter. This Macaca fascicularis (Crab-eating macaque) protein is Choline transporter-like protein 5 (SLC44A5).